The primary structure comprises 340 residues: Guanine nucleotide-binding protein G(I)/G(S)/G(T) subunit beta-1 (340 aa).

7 WD repeats span residues 53–83 (GHLA…IIWD), 95–125 (LRSS…PIYN), 141–170 (GHTG…ALWD), 182–212 (GHTG…KLWD), 224–254 (GHES…RLFD), 268–298 (NIIC…NVWD), and 310–340 (GHDN…KIWN).

Belongs to the WD repeat G protein beta family. As to quaternary structure, g proteins are composed of 3 units, alpha, beta and gamma.

Guanine nucleotide-binding proteins (G proteins) are involved as a modulator or transducer in various transmembrane signaling systems. The beta and gamma chains are required for the GTPase activity, for replacement of GDP by GTP, and for G protein-effector interaction. The sequence is that of Guanine nucleotide-binding protein G(I)/G(S)/G(T) subunit beta-1 (gnb1) from Xenopus laevis (African clawed frog).